Here is a 317-residue protein sequence, read N- to C-terminus: Zinc finger protein 771 (317 aa).

Lys33 participates in a covalent cross-link: Glycyl lysine isopeptide (Lys-Gly) (interchain with G-Cter in SUMO2). C2H2-type zinc fingers lie at residues 63–85 (HACP…ARTH), 91–113 (FACT…GRTH), 119–141 (YQCP…RRRH), 147–169 (YACA…LRVH), 175–197 (YACP…RRTH), 203–225 (YACA…RRVH), 231–253 (HRCA…ARTH), and 259–281 (YPCT…RRAH).

The protein belongs to the krueppel C2H2-type zinc-finger protein family.

It localises to the nucleus. Functionally, may be involved in transcriptional regulation. In Mus musculus (Mouse), this protein is Zinc finger protein 771 (Znf771).